We begin with the raw amino-acid sequence, 332 residues long: Geranylgeranyl pyrophosphate synthase dpasD (332 aa).

3 residues coordinate isopentenyl diphosphate: Lys55, Arg58, and His87. Mg(2+) contacts are provided by Asp94 and Asp98. Residue Arg103 participates in dimethylallyl diphosphate binding. Arg104 serves as a coordination point for isopentenyl diphosphate. Residues Lys181, Thr182, and Gln215 each contribute to the dimethylallyl diphosphate site. Asp218 provides a ligand contact to Mg(2+). Residues Asn222, Lys232, and Lys242 each coordinate dimethylallyl diphosphate.

The protein belongs to the FPP/GGPP synthase family. Mg(2+) serves as cofactor.

The catalysed reaction is isopentenyl diphosphate + dimethylallyl diphosphate = (2E)-geranyl diphosphate + diphosphate. The enzyme catalyses isopentenyl diphosphate + (2E)-geranyl diphosphate = (2E,6E)-farnesyl diphosphate + diphosphate. It carries out the reaction isopentenyl diphosphate + (2E,6E)-farnesyl diphosphate = (2E,6E,10E)-geranylgeranyl diphosphate + diphosphate. It functions in the pathway secondary metabolite biosynthesis; terpenoid biosynthesis. Functionally, geranylgeranyl pyrophosphate synthase; part of the gene cluster that mediates the biosynthesis of the diterpenoid pyrones subglutinols A and B. The first step of the pathway is the synthesis of the alpha-pyrone moiety by the polyketide synthase dpasA via condensation of one acetyl-CoA starter unit with 3 malonyl-CoA units and 2 methylations. The alpha-pyrone is then combined with geranylgeranyl pyrophosphate (GGPP) formed by the GGPP synthase dpasD through the action of the prenyltransferase dpasC to yield a linear alpha-pyrone diterpenoid. Subsequent steps in the diterpenoid pyrone biosynthetic pathway involve the decalin core formation, which is initiated by the epoxidation of the C10-C11 olefin by the FAD-dependent oxidoreductase dpasE, and is followed by a cyclization cascade catalyzed by the terpene cyclase dpasB. The FAD-linked oxidoreductase dpasF is then involved in tetrahydrofuran (THF) ring formation at the C5 unit to complete the formation of subglutinols A and B. DpasF also possesses an additional catalytic ability of multi-step oxidations to generate a new DDP analog with an enone system at the C5 named FDDP A. This chain is Geranylgeranyl pyrophosphate synthase dpasD, found in Apiospora sacchari (Arthrinium sacchari).